The sequence spans 172 residues: Translation initiation factor IF-3 (172 aa).

It belongs to the IF-3 family. Monomer.

The protein resides in the cytoplasm. Its function is as follows. IF-3 binds to the 30S ribosomal subunit and shifts the equilibrium between 70S ribosomes and their 50S and 30S subunits in favor of the free subunits, thus enhancing the availability of 30S subunits on which protein synthesis initiation begins. The sequence is that of Translation initiation factor IF-3 from Campylobacter fetus subsp. fetus (strain 82-40).